The primary structure comprises 598 residues: DNA mismatch repair protein MutL (598 aa).

The protein belongs to the DNA mismatch repair MutL/HexB family.

Its function is as follows. This protein is involved in the repair of mismatches in DNA. It is required for dam-dependent methyl-directed DNA mismatch repair. May act as a 'molecular matchmaker', a protein that promotes the formation of a stable complex between two or more DNA-binding proteins in an ATP-dependent manner without itself being part of a final effector complex. This Thiobacillus denitrificans (strain ATCC 25259 / T1) protein is DNA mismatch repair protein MutL.